A 669-amino-acid chain; its full sequence is Epithelial sodium channel subunit gamma (669 aa).

The Cytoplasmic portion of the chain corresponds to 1 to 67 (MAPPYHGDTR…VVSRGRLRKF (67 aa)). The chain crosses the membrane as a helical span at residues 68 to 88 (IWILLTLSAVGLILWQCAELI). Residues 89–551 (MSYYTASVSV…VILLSNFGGQ (463 aa)) lie on the Extracellular side of the membrane. Cystine bridges form between C113-C300, C223-C231, C277-C284, C389-C474, C411-C470, C415-C466, C424-C451, and C426-C440. The helical transmembrane segment at 552-572 (LGLWMSCSMVCVIEIIEVFFI) threads the bilayer. The Cytoplasmic segment spans residues 573 to 669 (DSFSIVMRRR…LPDTLEGRSH (97 aa)). The tract at residues 592-619 (DRKAPRPQEPPQVNAPAKEGHDNPVCTD) is disordered.

The protein belongs to the amiloride-sensitive sodium channel (TC 1.A.6) family. SCNN1G subfamily. Component of the heterotrimeric epithelial sodium channel (ENaC) composed of an alpha/SCNN1A, a beta/SCNN1B and a gamma/SCNN1G subunit.

Its subcellular location is the apical cell membrane. The enzyme catalyses Na(+)(in) = Na(+)(out). With respect to regulation, originally identified and characterized by its inhibition by the diuretic drug amiloride. This is one of the three pore-forming subunits of the heterotrimeric epithelial sodium channel (ENaC), a critical regulator of sodium balance and fluid homeostasis. ENaC operates in epithelial tissues, where it mediates the electrodiffusion of sodium ions from extracellular fluid through the apical membrane of cells, with water following osmotically. The chain is Epithelial sodium channel subunit gamma from Pelodiscus sinensis (Chinese softshell turtle).